Here is a 98-residue protein sequence, read N- to C-terminus: NADH-ubiquinone oxidoreductase chain 4L (98 aa).

3 consecutive transmembrane segments (helical) span residues 2 to 22 (MMAV…TLMF), 26 to 46 (LMST…ITTI), and 59 to 79 (IPIV…ALLV).

Belongs to the complex I subunit 4L family. As to quaternary structure, core subunit of respiratory chain NADH dehydrogenase (Complex I) which is composed of 45 different subunits.

Its subcellular location is the mitochondrion inner membrane. It carries out the reaction a ubiquinone + NADH + 5 H(+)(in) = a ubiquinol + NAD(+) + 4 H(+)(out). In terms of biological role, core subunit of the mitochondrial membrane respiratory chain NADH dehydrogenase (Complex I) which catalyzes electron transfer from NADH through the respiratory chain, using ubiquinone as an electron acceptor. Part of the enzyme membrane arm which is embedded in the lipid bilayer and involved in proton translocation. This chain is NADH-ubiquinone oxidoreductase chain 4L (MT-ND4L), found in Phodopus sungorus (Striped hairy-footed hamster).